Reading from the N-terminus, the 226-residue chain is Cytidylate kinase (226 aa).

10-18 (GPASSGKST) contributes to the ATP binding site.

This sequence belongs to the cytidylate kinase family. Type 1 subfamily.

Its subcellular location is the cytoplasm. The catalysed reaction is CMP + ATP = CDP + ADP. It catalyses the reaction dCMP + ATP = dCDP + ADP. The protein is Cytidylate kinase of Streptococcus pyogenes serotype M18 (strain MGAS8232).